We begin with the raw amino-acid sequence, 152 residues long: Transcriptional regulator MraZ (152 aa).

SpoVT-AbrB domains lie at 5 to 52 (ASAI…PLDE) and 81 to 124 (AHEC…DETA).

Belongs to the MraZ family. Forms oligomers.

The protein resides in the cytoplasm. It localises to the nucleoid. This is Transcriptional regulator MraZ from Shewanella woodyi (strain ATCC 51908 / MS32).